A 361-amino-acid chain; its full sequence is Peptide chain release factor 1 (361 aa).

Residue Gln-237 is modified to N5-methylglutamine. The interval 286–306 (AKQDQEQAAKRKSLVGSGDRS) is disordered.

It belongs to the prokaryotic/mitochondrial release factor family. In terms of processing, methylated by PrmC. Methylation increases the termination efficiency of RF1.

Its subcellular location is the cytoplasm. In terms of biological role, peptide chain release factor 1 directs the termination of translation in response to the peptide chain termination codons UAG and UAA. The sequence is that of Peptide chain release factor 1 from Coxiella burnetii (strain CbuG_Q212) (Coxiella burnetii (strain Q212)).